Consider the following 329-residue polypeptide: DNA-directed RNA polymerase subunit alpha (329 aa).

Positions 1 to 231 are alpha N-terminal domain (alpha-NTD); that stretch reads MSILSFQMPE…KHFMLFSDQT (231 aa). The alpha C-terminal domain (alpha-CTD) stretch occupies residues 247 to 329; it reads EEFLHMRKLL…DTAKYKLDED (83 aa).

The protein belongs to the RNA polymerase alpha chain family. Homodimer. The RNAP catalytic core consists of 2 alpha, 1 beta, 1 beta' and 1 omega subunit. When a sigma factor is associated with the core the holoenzyme is formed, which can initiate transcription.

The enzyme catalyses RNA(n) + a ribonucleoside 5'-triphosphate = RNA(n+1) + diphosphate. In terms of biological role, DNA-dependent RNA polymerase catalyzes the transcription of DNA into RNA using the four ribonucleoside triphosphates as substrates. This chain is DNA-directed RNA polymerase subunit alpha, found in Cytophaga hutchinsonii (strain ATCC 33406 / DSM 1761 / CIP 103989 / NBRC 15051 / NCIMB 9469 / D465).